The primary structure comprises 525 residues: Ent-kaurene oxidase (525 aa).

The chain crosses the membrane as a helical span at residues 31–51; it reads VHWLIYVAFGAWLCSYVIHVL. A heme-binding site is contributed by Cys-466.

This sequence belongs to the cytochrome P450 family. Heme is required as a cofactor.

The protein resides in the membrane. It catalyses the reaction ent-kaur-16-ene + 3 reduced [NADPH--hemoprotein reductase] + 3 O2 = ent-kaur-16-en-19-oate + 3 oxidized [NADPH--hemoprotein reductase] + 4 H2O + 4 H(+). It functions in the pathway plant hormone biosynthesis; gibberellin biosynthesis. Catalyzes three successive oxidations of the 4-methyl group of ent-kaurene giving kaurenoic acid, a key step in gibberellin (GA) biosynthesis. This chain is Ent-kaurene oxidase (CYP503A1), found in Fusarium fujikuroi (Bakanae and foot rot disease fungus).